A 293-amino-acid chain; its full sequence is Histamine N-methyltransferase B (293 aa).

A substrate-binding site is contributed by glutamate 28. S-adenosyl-L-methionine is bound by residues glycine 60, glutamate 89, glutamine 94, serine 120, and isoleucine 142. Asparagine 283 contacts substrate.

It belongs to the class I-like SAM-binding methyltransferase superfamily. HNMT family. In terms of assembly, monomer.

The protein localises to the cytoplasm. It catalyses the reaction histamine + S-adenosyl-L-methionine = N(tau)-methylhistamine + S-adenosyl-L-homocysteine + H(+). Inactivates histamine by N-methylation. Plays an important role in degrading histamine and in regulating the airway response to histamine. This Xenopus laevis (African clawed frog) protein is Histamine N-methyltransferase B (hnmt-b).